Consider the following 492-residue polypeptide: Tyrosinase-like protein 1 (492 aa).

The signal sequence occupies residues 1 to 22; it reads MDKMRTLQSLIVKLTLLYGALC. 6 residues coordinate Cu cation: His-147, His-155, His-164, His-289, His-293, and His-316. The segment at 472–492 is disordered; that stretch reads SEPPLQLEGPSFTSSFDDPRI. Positions 482–492 are enriched in polar residues; that stretch reads SFTSSFDDPRI.

It depends on Cu(2+) as a cofactor. As to expression, prismatic layer of shell (at protein level). Expressed primarily in the mantle with highest level in the mantle edge and lower level in the mantle pallium.

The protein resides in the secreted. The polypeptide is Tyrosinase-like protein 1 (Margaritifera margaritifera (Freshwater pearl mussel)).